Reading from the N-terminus, the 172-residue chain is Ribosome maturation factor RimM (172 aa).

The region spanning 96–168 (DGEFYYHEII…RVDVELLEGL (73 aa)) is the PRC barrel domain.

It belongs to the RimM family. Binds ribosomal protein uS19.

Its subcellular location is the cytoplasm. Functionally, an accessory protein needed during the final step in the assembly of 30S ribosomal subunit, possibly for assembly of the head region. Essential for efficient processing of 16S rRNA. May be needed both before and after RbfA during the maturation of 16S rRNA. It has affinity for free ribosomal 30S subunits but not for 70S ribosomes. This is Ribosome maturation factor RimM from Streptococcus suis (strain 05ZYH33).